Consider the following 359-residue polypeptide: Peptide chain release factor 1 (359 aa).

The residue at position 236 (glutamine 236) is an N5-methylglutamine.

It belongs to the prokaryotic/mitochondrial release factor family. In terms of processing, methylated by PrmC. Methylation increases the termination efficiency of RF1.

It localises to the cytoplasm. Functionally, peptide chain release factor 1 directs the termination of translation in response to the peptide chain termination codons UAG and UAA. The sequence is that of Peptide chain release factor 1 from Streptococcus pneumoniae serotype 2 (strain D39 / NCTC 7466).